Consider the following 336-residue polypeptide: D-alanine--D-alanine ligase (336 aa).

One can recognise an ATP-grasp domain in the interval 124–330 (KMWFSALGVP…FTEYLIDVIG (207 aa)). Residue 154 to 209 (AFDNWGSVFVKAASQGSSVGCYKVDVKANIANVLKDAFSYAPYVVVEQTIHARELE) coordinates ATP. The Mg(2+) site is built by Asp-284, Glu-297, and Asn-299.

The protein belongs to the D-alanine--D-alanine ligase family. Mg(2+) is required as a cofactor. Mn(2+) serves as cofactor.

The protein localises to the cytoplasm. The catalysed reaction is 2 D-alanine + ATP = D-alanyl-D-alanine + ADP + phosphate + H(+). Its pathway is cell wall biogenesis; peptidoglycan biosynthesis. In terms of biological role, cell wall formation. This chain is D-alanine--D-alanine ligase, found in Shewanella frigidimarina (strain NCIMB 400).